We begin with the raw amino-acid sequence, 59 residues long: Large ribosomal subunit protein uL30 (59 aa).

The protein belongs to the universal ribosomal protein uL30 family. As to quaternary structure, part of the 50S ribosomal subunit.

This is Large ribosomal subunit protein uL30 from Solibacter usitatus (strain Ellin6076).